Consider the following 313-residue polypeptide: MIIVTGGAGMIGSNIVKALNEIGINDILVVDNLKNGRKFKNLVDLDITDYMDRDDFLTQIMAGDNFGPIEAVFHEGACSATTEWDGKYMMLNNYEYSKELLHYCLEREIPFLYASSAATYGETTVFKEEREYEGALNVYGYSKQQFDNYVRRLWQDAEEHGETLSQITGFRYFNVYGPREQHKGSMASVAFHLNNQILAGENPKLFAGSEQFKRDFIYVGDVCKVNLWFMQNGVSGIFNCGTGNAESFEEVAKAVIKHHGKGEIETIPFPEHLKGAYQEFTQADLTKLRAAGCDVEFKNVAEGVAEYMAIVNG.

Residues 10–11 (MI), 31–32 (DN), K38, R53, 75–79 (EGACS), and N92 contribute to the NADP(+) site. The active-site Proton acceptor is the Y139. K143 is an NADP(+) binding site. N174 contacts substrate. Positions 175 and 183 each coordinate NADP(+). The Proton acceptor role is filled by K183. Substrate is bound by residues S185, H192, 206 to 209 (FAGS), R214, and Y277.

The protein belongs to the NAD(P)-dependent epimerase/dehydratase family. HldD subfamily. In terms of assembly, homopentamer. NADP(+) is required as a cofactor.

It carries out the reaction ADP-D-glycero-beta-D-manno-heptose = ADP-L-glycero-beta-D-manno-heptose. It functions in the pathway nucleotide-sugar biosynthesis; ADP-L-glycero-beta-D-manno-heptose biosynthesis; ADP-L-glycero-beta-D-manno-heptose from D-glycero-beta-D-manno-heptose 7-phosphate: step 4/4. It participates in bacterial outer membrane biogenesis; LPS core biosynthesis. In terms of biological role, catalyzes the interconversion between ADP-D-glycero-beta-D-manno-heptose and ADP-L-glycero-beta-D-manno-heptose via an epimerization at carbon 6 of the heptose. The sequence is that of ADP-L-glycero-D-manno-heptose-6-epimerase from Vibrio vulnificus (strain YJ016).